A 347-amino-acid polypeptide reads, in one-letter code: Photosystem II assembly protein Ycf48 (347 aa).

The first 38 residues, 1 to 38, serve as a signal peptide directing secretion; it reads MFAKQIDIHWQKMKGIKFLHWLLGTVLLWVSLSTPALA. Positions 202–226 match the Arg-rich patch motif; the sequence is RGSFYSTWEPGQTAWEPHNRTTSRR.

This sequence belongs to the Ycf48 family. Interacts with the D1 protein (crystallized with PsbA1 or PsbA3), via the latter's C-terminal prepropeptide, may interact with parts of the mature D1 protein as well.

The protein localises to the cellular thylakoid lumen. Functionally, a factor required for optimal assembly of photosystem II (PSII), acting in the early stages of PSII assembly. Also plays a role in replacement of photodamaged D1 (psbA). Assists YidC in synthesis of chlorophyll-binding proteins. This is Photosystem II assembly protein Ycf48 from Thermosynechococcus vestitus (strain NIES-2133 / IAM M-273 / BP-1).